A 137-amino-acid chain; its full sequence is Ribonuclease VapC27 (137 aa).

One can recognise a PINc domain in the interval 7 to 125 (VDTSVAIPLL…ATRDARAKDT (119 aa)). Mg(2+)-binding residues include D8 and D101.

It belongs to the PINc/VapC protein family. Interacts with cognate antitoxin VapB27. Mg(2+) serves as cofactor.

It is found in the secreted. In terms of biological role, probably the toxic component of a type II toxin-antitoxin (TA) system. An RNase. Its cognate antitoxin is VapB27. In Mycobacterium tuberculosis (strain ATCC 25618 / H37Rv), this protein is Ribonuclease VapC27.